We begin with the raw amino-acid sequence, 212 residues long: Lipid A acyltransferase PagP (212 aa).

An N-terminal signal peptide occupies residues 1-24; that stretch reads MYLKRTLITLSLITLPIVPFLSYA. Residues 36–47 show a composition bias toward polar residues; that stretch reads NLAPVTVDSSDP. Residues 36–56 form a disordered region; that stretch reads NLAPVTVDSSDPVSDKQGESW. Active-site residues include H84, D127, and S128.

It belongs to the lipid A palmitoyltransferase family. In terms of assembly, homodimer.

It localises to the cell outer membrane. The catalysed reaction is a lipid A + a 1,2-diacyl-sn-glycero-3-phosphocholine = a hepta-acyl lipid A + a 2-acyl-sn-glycero-3-phosphocholine. It catalyses the reaction a lipid IVA + a 1,2-diacyl-sn-glycero-3-phosphocholine = a lipid IVB + a 2-acyl-sn-glycero-3-phosphocholine. The enzyme catalyses a lipid IIA + a 1,2-diacyl-sn-glycero-3-phosphocholine = a lipid IIB + a 2-acyl-sn-glycero-3-phosphocholine. Transfers a fatty acid residue from the sn-1 position of a phospholipid to the N-linked hydroxyfatty acid chain on the proximal unit of lipid A or its precursors. In Pectobacterium carotovorum subsp. carotovorum (strain PC1), this protein is Lipid A acyltransferase PagP.